Reading from the N-terminus, the 391-residue chain is Casein kinase II subunit alpha 3 (391 aa).

One can recognise a Protein kinase domain in the interval Tyr-39–Phe-324. Residues Leu-45–Val-53 and Lys-68 contribute to the ATP site. Catalysis depends on Asp-156, which acts as the Proton acceptor.

Belongs to the protein kinase superfamily. Ser/Thr protein kinase family. CK2 subfamily. In terms of assembly, heterotetramer composed of two catalytic subunits (alpha chain and/or alpha' chain) and two regulatory subunits (beta chains). Interacts with PML. Detected in blood platelets and megakaryocyte cell lines. Poorly expressed in lung. Highly expressed in lung tumor tissues.

It catalyses the reaction L-seryl-[protein] + ATP = O-phospho-L-seryl-[protein] + ADP + H(+). It carries out the reaction L-threonyl-[protein] + ATP = O-phospho-L-threonyl-[protein] + ADP + H(+). Its function is as follows. Probable catalytic subunit of a constitutively active serine/threonine-protein kinase complex that phosphorylates a large number of substrates containing acidic residues C-terminal to the phosphorylated serine or threonine. Amplification-dependent oncogene; promotes cell proliferation and tumorigenesis by down-regulating expression of the tumor suppressor protein, PML. May play a role in the pathogenesis of the lung cancer development and progression. This Homo sapiens (Human) protein is Casein kinase II subunit alpha 3 (CSNK2A3).